Reading from the N-terminus, the 94-residue chain is Large ribosomal subunit protein bL25 (94 aa).

It belongs to the bacterial ribosomal protein bL25 family. Part of the 50S ribosomal subunit; part of the 5S rRNA/L5/L18/L25 subcomplex. Contacts the 5S rRNA. Binds to the 5S rRNA independently of L5 and L18.

Functionally, this is one of the proteins that binds to the 5S RNA in the ribosome where it forms part of the central protuberance. The polypeptide is Large ribosomal subunit protein bL25 (Klebsiella pneumoniae (strain 342)).